The chain runs to 788 residues: Endonuclease MutS2 (788 aa).

332 to 339 (GPNTGGKT) lines the ATP pocket. One can recognise a Smr domain in the interval 713–788 (VDLRGMDAEE…GTGVTVVELK (76 aa)).

This sequence belongs to the DNA mismatch repair MutS family. MutS2 subfamily. As to quaternary structure, homodimer. Binds to stalled ribosomes, contacting rRNA.

Endonuclease that is involved in the suppression of homologous recombination and thus may have a key role in the control of bacterial genetic diversity. Its function is as follows. Acts as a ribosome collision sensor, splitting the ribosome into its 2 subunits. Detects stalled/collided 70S ribosomes which it binds and splits by an ATP-hydrolysis driven conformational change. Acts upstream of the ribosome quality control system (RQC), a ribosome-associated complex that mediates the extraction of incompletely synthesized nascent chains from stalled ribosomes and their subsequent degradation. Probably generates substrates for RQC. This is Endonuclease MutS2 from Clostridium botulinum (strain Okra / Type B1).